The chain runs to 191 residues: dCTP deaminase, dUMP-forming (191 aa).

DCTP-binding positions include 101-106, aspartate 119, 127-129, glutamine 148, tyrosine 162, and glutamine 174; these read KSSLGR and TLE. Glutamate 129 (proton donor/acceptor) is an active-site residue. The tract at residues 169-191 is disordered; the sequence is SRYQGQRGPTASRSFQNFHRTQV. The span at 171-191 shows a compositional bias: polar residues; sequence YQGQRGPTASRSFQNFHRTQV.

The protein belongs to the dCTP deaminase family. In terms of assembly, homotrimer.

It catalyses the reaction dCTP + 2 H2O = dUMP + NH4(+) + diphosphate. Its pathway is pyrimidine metabolism; dUMP biosynthesis; dUMP from dCTP: step 1/1. Functionally, bifunctional enzyme that catalyzes both the deamination of dCTP to dUTP and the hydrolysis of dUTP to dUMP without releasing the toxic dUTP intermediate. This Streptomyces griseus subsp. griseus (strain JCM 4626 / CBS 651.72 / NBRC 13350 / KCC S-0626 / ISP 5235) protein is dCTP deaminase, dUMP-forming.